A 593-amino-acid chain; its full sequence is Mono(ADP-ribosyl)transferase SpvB (593 aa).

A disordered region spans residues 361–384 (PVNNMMPPPPPPPPPMMGGNSSRP). Positions 366–376 (MPPPPPPPPPM) are enriched in pro residues. One can recognise a TR mART core domain in the interval 375–578 (PMMGGNSSRP…LRLSDDATAD (204 aa)). Active-site residues include arginine 473, serine 503, and glutamate 540.

The protein belongs to the SpvB family.

Its subcellular location is the secreted. It catalyses the reaction L-arginyl-[protein] + NAD(+) = N(omega)-(ADP-D-ribosyl)-L-arginyl-[protein] + nicotinamide + H(+). Functionally, mono-ADP-ribosylates muscle and non-muscle actin. ADP-ribosylates Chinese hamster ovary and HeLa cell actin as well as rabbit muscle, porcine heart actin and non-muscle beta- and gamma-actin. ADP-ribosylation of actin prevents the polymerization of G actin to F actin, causing actin filament depolymerization, destruction of the cytoskeleton and cytotoxicity; this requires only the C-terminal 120 residues. Does not possess NAD(+)-glycohydrolase activity, unlike most mART enzymes. In Salmonella dublin, this protein is Mono(ADP-ribosyl)transferase SpvB (spvB).